The primary structure comprises 164 residues: UPF0304 protein YfbU (164 aa).

The protein belongs to the UPF0304 family.

This chain is UPF0304 protein YfbU, found in Salmonella enteritidis PT4 (strain P125109).